Consider the following 131-residue polypeptide: Small ribosomal subunit protein uS8 (131 aa).

Belongs to the universal ribosomal protein uS8 family. As to quaternary structure, part of the 30S ribosomal subunit. Contacts proteins S5 and S12.

Functionally, one of the primary rRNA binding proteins, it binds directly to 16S rRNA central domain where it helps coordinate assembly of the platform of the 30S subunit. This is Small ribosomal subunit protein uS8 from Chlorobium limicola (strain DSM 245 / NBRC 103803 / 6330).